Reading from the N-terminus, the 278-residue chain is S-adenosylmethionine decarboxylase proenzyme (278 aa).

The segment at 96-115 is disordered; the sequence is LTPESLTGESPGPLPGNKPS. The Schiff-base intermediate with substrate; via pyruvic acid role is filled by serine 126. At serine 126 the chain carries Pyruvic acid (Ser); by autocatalysis. The active-site Proton acceptor; for processing activity is the histidine 131. The active-site Proton donor; for catalytic activity is cysteine 154.

Belongs to the prokaryotic AdoMetDC family. Type 2 subfamily. In terms of assembly, heterooctamer of four alpha and four beta chains arranged as a tetramer of alpha/beta heterodimers. Pyruvate serves as cofactor. Is synthesized initially as an inactive proenzyme. Formation of the active enzyme involves a self-maturation process in which the active site pyruvoyl group is generated from an internal serine residue via an autocatalytic post-translational modification. Two non-identical subunits are generated from the proenzyme in this reaction, and the pyruvate is formed at the N-terminus of the alpha chain, which is derived from the carboxyl end of the proenzyme. The post-translation cleavage follows an unusual pathway, termed non-hydrolytic serinolysis, in which the side chain hydroxyl group of the serine supplies its oxygen atom to form the C-terminus of the beta chain, while the remainder of the serine residue undergoes an oxidative deamination to produce ammonia and the pyruvoyl group blocking the N-terminus of the alpha chain.

The enzyme catalyses S-adenosyl-L-methionine + H(+) = S-adenosyl 3-(methylsulfanyl)propylamine + CO2. It participates in amine and polyamine biosynthesis; S-adenosylmethioninamine biosynthesis; S-adenosylmethioninamine from S-adenosyl-L-methionine: step 1/1. Its function is as follows. Catalyzes the decarboxylation of S-adenosylmethionine to S-adenosylmethioninamine (dcAdoMet), the propylamine donor required for the synthesis of the polyamines spermine and spermidine from the diamine putrescine. The protein is S-adenosylmethionine decarboxylase proenzyme of Alkaliphilus metalliredigens (strain QYMF).